Reading from the N-terminus, the 185-residue chain is Ribosome-recycling factor (185 aa).

The tract at residues 139–159 (IDSLEKDGDVSGDEADRAKKK) is disordered. Positions 141-159 (SLEKDGDVSGDEADRAKKK) are enriched in basic and acidic residues.

It belongs to the RRF family.

It is found in the cytoplasm. Functionally, responsible for the release of ribosomes from messenger RNA at the termination of protein biosynthesis. May increase the efficiency of translation by recycling ribosomes from one round of translation to another. The sequence is that of Ribosome-recycling factor from Sorangium cellulosum (strain So ce56) (Polyangium cellulosum (strain So ce56)).